Consider the following 196-residue polypeptide: Protein GrpE (196 aa).

The disordered stretch occupies residues 1–41; the sequence is MSSKEQKTPEGQAPEEIITEQHDDVEAVEPEVSAEQVDPRD.

The protein belongs to the GrpE family. In terms of assembly, homodimer.

The protein resides in the cytoplasm. In terms of biological role, participates actively in the response to hyperosmotic and heat shock by preventing the aggregation of stress-denatured proteins, in association with DnaK and GrpE. It is the nucleotide exchange factor for DnaK and may function as a thermosensor. Unfolded proteins bind initially to DnaJ; upon interaction with the DnaJ-bound protein, DnaK hydrolyzes its bound ATP, resulting in the formation of a stable complex. GrpE releases ADP from DnaK; ATP binding to DnaK triggers the release of the substrate protein, thus completing the reaction cycle. Several rounds of ATP-dependent interactions between DnaJ, DnaK and GrpE are required for fully efficient folding. In Klebsiella pneumoniae (strain 342), this protein is Protein GrpE.